The sequence spans 282 residues: Protein OS-9 homolog (282 aa).

Positions 1-23 (MRITQILLCLVIVALSSSSHVWS) are cleaved as a signal peptide. Asparagine 94 carries N-linked (GlcNAc...) asparagine glycosylation. Residues 120–239 (EKCLFRQEGW…TVQCPTLCKH (120 aa)) form the MRH domain. A disulfide bridge connects residues cysteine 122 and cysteine 135. Tryptophan 129, tryptophan 130, and glutamine 142 together coordinate a mannooligosaccharide derivative. N-linked (GlcNAc...) asparagine glycans are attached at residues asparagine 169 and asparagine 190. 2 disulfides stabilise this stretch: cysteine 194-cysteine 225 and cysteine 209-cysteine 237. Positions 195, 201, 221, and 227 each coordinate a mannooligosaccharide derivative. Residues 262 to 276 (DATRNKEEQAVDESP) show a composition bias toward basic and acidic residues. A disordered region spans residues 262–282 (DATRNKEEQAVDESPKMIADS).

The protein belongs to the OS-9 family. As to quaternary structure, interacts with HRD3A.

It localises to the endoplasmic reticulum. Its function is as follows. Lectin which functions in endoplasmic reticulum (ER) quality control and ER-associated degradation (ERAD). May bind terminally misfolded non-glycosylated proteins as well as improperly folded glycoproteins, retain them in the ER, and possibly transfer them to the ubiquitination machinery and promote their degradation. Targets the misfolded LRR receptor kinase BRI1 and the misfolded receptor-like kinase EFR. The polypeptide is Protein OS-9 homolog (Arabidopsis thaliana (Mouse-ear cress)).